A 397-amino-acid chain; its full sequence is Tryptophan synthase beta chain (397 aa).

Lys87 is subject to N6-(pyridoxal phosphate)lysine.

It belongs to the TrpB family. As to quaternary structure, tetramer of two alpha and two beta chains. The cofactor is pyridoxal 5'-phosphate.

It carries out the reaction (1S,2R)-1-C-(indol-3-yl)glycerol 3-phosphate + L-serine = D-glyceraldehyde 3-phosphate + L-tryptophan + H2O. It participates in amino-acid biosynthesis; L-tryptophan biosynthesis; L-tryptophan from chorismate: step 5/5. Its function is as follows. The beta subunit is responsible for the synthesis of L-tryptophan from indole and L-serine. This Salmonella choleraesuis (strain SC-B67) protein is Tryptophan synthase beta chain.